Consider the following 494-residue polypeptide: Protein nucleotidyltransferase YdiU (494 aa).

Glycine 99, glycine 101, arginine 102, lysine 118, aspartate 130, glycine 131, arginine 181, and arginine 188 together coordinate ATP. The Proton acceptor role is filled by aspartate 261. Mg(2+) is bound by residues asparagine 262 and aspartate 271. ATP is bound at residue aspartate 271.

Belongs to the SELO family. Mg(2+) serves as cofactor. It depends on Mn(2+) as a cofactor.

The catalysed reaction is L-seryl-[protein] + ATP = 3-O-(5'-adenylyl)-L-seryl-[protein] + diphosphate. It carries out the reaction L-threonyl-[protein] + ATP = 3-O-(5'-adenylyl)-L-threonyl-[protein] + diphosphate. It catalyses the reaction L-tyrosyl-[protein] + ATP = O-(5'-adenylyl)-L-tyrosyl-[protein] + diphosphate. The enzyme catalyses L-histidyl-[protein] + UTP = N(tele)-(5'-uridylyl)-L-histidyl-[protein] + diphosphate. The catalysed reaction is L-seryl-[protein] + UTP = O-(5'-uridylyl)-L-seryl-[protein] + diphosphate. It carries out the reaction L-tyrosyl-[protein] + UTP = O-(5'-uridylyl)-L-tyrosyl-[protein] + diphosphate. Functionally, nucleotidyltransferase involved in the post-translational modification of proteins. It can catalyze the addition of adenosine monophosphate (AMP) or uridine monophosphate (UMP) to a protein, resulting in modifications known as AMPylation and UMPylation. In Variovorax paradoxus (strain S110), this protein is Protein nucleotidyltransferase YdiU.